The primary structure comprises 357 residues: S-adenosylmethionine:tRNA ribosyltransferase-isomerase (357 aa).

It belongs to the QueA family. In terms of assembly, monomer.

It is found in the cytoplasm. The enzyme catalyses 7-aminomethyl-7-carbaguanosine(34) in tRNA + S-adenosyl-L-methionine = epoxyqueuosine(34) in tRNA + adenine + L-methionine + 2 H(+). Its pathway is tRNA modification; tRNA-queuosine biosynthesis. In terms of biological role, transfers and isomerizes the ribose moiety from AdoMet to the 7-aminomethyl group of 7-deazaguanine (preQ1-tRNA) to give epoxyqueuosine (oQ-tRNA). This is S-adenosylmethionine:tRNA ribosyltransferase-isomerase from Edwardsiella ictaluri (strain 93-146).